The following is a 383-amino-acid chain: Chorismate synthase (383 aa).

Arginine 39 and arginine 45 together coordinate NADP(+). FMN contacts are provided by residues 127 to 129 (RAS), 249 to 250 (QS), glycine 294, 309 to 313 (KPIPT), and arginine 335.

It belongs to the chorismate synthase family. As to quaternary structure, homotetramer. The cofactor is FMNH2.

The enzyme catalyses 5-O-(1-carboxyvinyl)-3-phosphoshikimate = chorismate + phosphate. Its pathway is metabolic intermediate biosynthesis; chorismate biosynthesis; chorismate from D-erythrose 4-phosphate and phosphoenolpyruvate: step 7/7. Its function is as follows. Catalyzes the anti-1,4-elimination of the C-3 phosphate and the C-6 proR hydrogen from 5-enolpyruvylshikimate-3-phosphate (EPSP) to yield chorismate, which is the branch point compound that serves as the starting substrate for the three terminal pathways of aromatic amino acid biosynthesis. This reaction introduces a second double bond into the aromatic ring system. This Caldicellulosiruptor bescii (strain ATCC BAA-1888 / DSM 6725 / KCTC 15123 / Z-1320) (Anaerocellum thermophilum) protein is Chorismate synthase.